The primary structure comprises 808 residues: Protein translocase subunit SecA 2 (808 aa).

Residues glutamine 124, 142-146, and aspartate 535 each bind ATP; that span reads GEGKT.

This sequence belongs to the SecA family. As to quaternary structure, monomer and homodimer. Part of the essential Sec protein translocation apparatus which comprises SecA, SecYEG and auxiliary proteins SecDF. Other proteins may also be involved.

The protein localises to the cell membrane. The protein resides in the cytoplasm. The catalysed reaction is ATP + H2O + cellular proteinSide 1 = ADP + phosphate + cellular proteinSide 2.. Part of the Sec protein translocase complex. Interacts with the SecYEG preprotein conducting channel. Has a central role in coupling the hydrolysis of ATP to the transfer of proteins into and across the cell membrane, serving as an ATP-driven molecular motor driving the stepwise translocation of polypeptide chains across the membrane. This is Protein translocase subunit SecA 2 from Mycobacterium bovis (strain BCG / Pasteur 1173P2).